The chain runs to 738 residues: Junction plakoglobin (738 aa).

ARM repeat units lie at residues 128–167, 168–211, 212–251, 254–293, 294–337, 338–377, 379–416, 419–460, 466–506, 508–547, 570–609, and 611–657; these read NYQD…QLSK, KEAS…LSHH, REGL…NLLL, EGAK…LLAY, GNQE…LSVC, PSNK…NLSD, ATKQ…NLTC, GRNK…HLTS, EVAQ…NLAL, PANH…QPYT, PVNR…ELAQ, and KEAA…ADYR.

The protein belongs to the beta-catenin family. As to quaternary structure, homodimer.

It localises to the cell junction. Its subcellular location is the adherens junction. The protein resides in the desmosome. The protein localises to the cytoplasm. It is found in the cytoskeleton. It localises to the membrane. Functionally, common junctional plaque protein. The membrane-associated plaques are architectural elements in an important strategic position to influence the arrangement and function of both the cytoskeleton and the cells within the tissue. The presence of plakoglobin in both the desmosomes and in the intermediate junctions suggests that it plays a central role in the structure and function of submembranous plaques. This is Junction plakoglobin (jup) from Xenopus laevis (African clawed frog).